Here is a 139-residue protein sequence, read N- to C-terminus: Large ribosomal subunit protein uL16 (139 aa).

The protein belongs to the universal ribosomal protein uL16 family. As to quaternary structure, part of the 50S ribosomal subunit.

Its function is as follows. Binds 23S rRNA and is also seen to make contacts with the A and possibly P site tRNAs. This Neorickettsia sennetsu (strain ATCC VR-367 / Miyayama) (Ehrlichia sennetsu) protein is Large ribosomal subunit protein uL16 (rplP).